The chain runs to 365 residues: Fatty acid hydroxylase vlmA (365 aa).

The tract at residues threonine 20 to isoleucine 41 is disordered. Asparagine 47 is a glycosylation site (N-linked (GlcNAc...) asparagine). 4 helical membrane-spanning segments follow: residues isoleucine 62–isoleucine 82, valine 89–leucine 109, leucine 144–tyrosine 164, and tryptophan 179–tyrosine 199. The 147-residue stretch at leucine 189–threonine 335 folds into the Fatty acid hydroxylase domain.

Belongs to the sterol desaturase family. TMEM195 subfamily.

The protein localises to the membrane. The protein operates within secondary metabolite biosynthesis. Functionally, fatty acid hydroxylase; part of the gene cluster that mediates the biosynthesis of verlamelin, a lipopeptide that exhibits antifungal activity against plant pathogenic fungi. Verlamelin is a cyclic hexadepsipeptide and is bridged by ester bonding between a 5-hydroxytetradecanoic acid moiety and a carboxyl group on the terminal Val of amide-bonded tetradecanoyl-hexapeptide D-allo-Thr-D-Ala-L-Pro-L-Gln-D-Tyr-L-Val. VlmA and vlmB are altogether regarded as essential components in the biosynthesis of 5-hydroxytetradecanoic acid. VlmA catalyzes the hydroxylation at position C5 of tetradecanoic acid produced in primary metabolism, while the precise function of vlmB still remains to be solved. To be loaded onto the waiting NRPS, 5-hydroxytetradecanoic acid is activated in the form of acyladenylate by the AMP-dependent ligase vlmC. VlmS seems to accept the fatty-acyl intermediate onto the initial module to further elongate amino acid residues by the downstream modules. In addition, in the last module at its C-terminus, vlmS contains a surplus condensation (C) domain that may be involved in cyclization, the last step to form verlamelin. This Lecanicillium sp protein is Fatty acid hydroxylase vlmA.